An 847-amino-acid chain; its full sequence is DNA mismatch repair protein MutS (847 aa).

Position 602–609 (602–609 (GPNMSGKS)) interacts with ATP.

Belongs to the DNA mismatch repair MutS family.

Functionally, this protein is involved in the repair of mismatches in DNA. It is possible that it carries out the mismatch recognition step. This protein has a weak ATPase activity. The polypeptide is DNA mismatch repair protein MutS (Streptococcus uberis (strain ATCC BAA-854 / 0140J)).